The chain runs to 87 residues: Small ribosomal subunit protein uS15c (87 aa).

It belongs to the universal ribosomal protein uS15 family. Part of the 30S ribosomal subunit.

It localises to the plastid. It is found in the chloroplast. This is Small ribosomal subunit protein uS15c (rps15) from Amborella trichopoda.